The sequence spans 257 residues: UPF0246 protein Shewana3_3143 (257 aa).

Belongs to the UPF0246 family.

In Shewanella sp. (strain ANA-3), this protein is UPF0246 protein Shewana3_3143.